A 265-amino-acid polypeptide reads, in one-letter code: Photosystem II 22 kDa protein, chloroplastic (265 aa).

A chloroplast-targeting transit peptide spans 1 to 59 (MAQTMLLTSGVTAGHFLRNKSPLAQPKVHHLFLSGNSPVALPSRRQSFVPLALFKPKTK). 2 tandem repeats follow at residues 54-158 (FKPK…FVDD) and 159-264 (PPTG…DGEE). Transmembrane regions (helical) follow at residues 96-116 (VAMIGFAASLLGEALTGKGIL), 130-150 (AEPLLLFFILFTLLGAIGALG), 195-215 (LFVGRLAQLGIAFSLIGEIIT), and 229-249 (IPIQDIEPLVLLNVAFFFFAA).

The protein belongs to the ELIP/psbS family.

It is found in the plastid. It localises to the chloroplast thylakoid membrane. Functionally, plays an important role in non-photochemical quenching (NPQ), a process maintains the balance between dissipation and utilization of light energy to minimize generation of oxidizing molecules, thereby protecting the plant against photo-oxidative damage; acts upstream of DLDG1. Is not necessary for efficient light harvesting and photosynthesis. This is Photosystem II 22 kDa protein, chloroplastic from Arabidopsis thaliana (Mouse-ear cress).